The following is a 49-amino-acid chain: Peridinin-chlorophyll a-binding protein (49 aa).

Monomer. Binds 12 peridinin and 2 chlorophyll a molecules per monomer.

The protein localises to the plastid. Its subcellular location is the chloroplast. In terms of biological role, water-soluble antenna for capture of solar energy in the blue-green range. Peridinin is an asymmetric carotenoid. The chain is Peridinin-chlorophyll a-binding protein from Alexandrium cohorticula (Dinoflagellate).